The chain runs to 273 residues: Large ribosomal subunit protein uL2 (273 aa).

The interval 228–273 is disordered; sequence VDHPHGGGEGKTSGGRHPVTPWGFPTKGKKTRKNKRTSKFIVKKRK. Over residues 254 to 273 the composition is skewed to basic residues; it reads KGKKTRKNKRTSKFIVKKRK.

It belongs to the universal ribosomal protein uL2 family. Part of the 50S ribosomal subunit. Forms a bridge to the 30S subunit in the 70S ribosome.

Its function is as follows. One of the primary rRNA binding proteins. Required for association of the 30S and 50S subunits to form the 70S ribosome, for tRNA binding and peptide bond formation. It has been suggested to have peptidyltransferase activity; this is somewhat controversial. Makes several contacts with the 16S rRNA in the 70S ribosome. This is Large ribosomal subunit protein uL2 from Rickettsia rickettsii (strain Iowa).